The following is a 294-amino-acid chain: UDP-3-O-acyl-N-acetylglucosamine deacetylase (294 aa).

Zn(2+) contacts are provided by H75, H232, and D236. H259 (proton donor) is an active-site residue.

The protein belongs to the LpxC family. Zn(2+) serves as cofactor.

It carries out the reaction a UDP-3-O-[(3R)-3-hydroxyacyl]-N-acetyl-alpha-D-glucosamine + H2O = a UDP-3-O-[(3R)-3-hydroxyacyl]-alpha-D-glucosamine + acetate. It participates in glycolipid biosynthesis; lipid IV(A) biosynthesis; lipid IV(A) from (3R)-3-hydroxytetradecanoyl-[acyl-carrier-protein] and UDP-N-acetyl-alpha-D-glucosamine: step 2/6. Functionally, catalyzes the hydrolysis of UDP-3-O-myristoyl-N-acetylglucosamine to form UDP-3-O-myristoylglucosamine and acetate, the committed step in lipid A biosynthesis. The chain is UDP-3-O-acyl-N-acetylglucosamine deacetylase from Campylobacter hominis (strain ATCC BAA-381 / DSM 21671 / CCUG 45161 / LMG 19568 / NCTC 13146 / CH001A).